A 446-amino-acid polypeptide reads, in one-letter code: Adenylosuccinate synthetase (446 aa).

GTP contacts are provided by residues 12-18 and 40-42; these read GDEGKGK and GHT. Asp-13 (proton acceptor) is an active-site residue. Residues Asp-13 and Gly-40 each coordinate Mg(2+). Residues 13 to 16, 38 to 41, Thr-128, Arg-142, Gln-223, Thr-238, and Arg-302 each bind IMP; these read DEGK and NAGH. Residue His-41 is the Proton donor of the active site. Substrate is bound at residue 298 to 304; the sequence is TTTGRRR. GTP-binding positions include Arg-304, 330 to 332, and 412 to 414; these read KLD and SLG.

The protein belongs to the adenylosuccinate synthetase family. Homodimer. The cofactor is Mg(2+).

Its subcellular location is the cytoplasm. The enzyme catalyses IMP + L-aspartate + GTP = N(6)-(1,2-dicarboxyethyl)-AMP + GDP + phosphate + 2 H(+). It functions in the pathway purine metabolism; AMP biosynthesis via de novo pathway; AMP from IMP: step 1/2. Its function is as follows. Plays an important role in the de novo pathway of purine nucleotide biosynthesis. Catalyzes the first committed step in the biosynthesis of AMP from IMP. In Acaryochloris marina (strain MBIC 11017), this protein is Adenylosuccinate synthetase.